Consider the following 147-residue polypeptide: Small ribosomal subunit protein uS12 (147 aa).

It belongs to the universal ribosomal protein uS12 family. In terms of assembly, part of the 30S ribosomal subunit.

Its function is as follows. With S4 and S5 plays an important role in translational accuracy. Located at the interface of the 30S and 50S subunits. This is Small ribosomal subunit protein uS12 from Sulfolobus acidocaldarius (strain ATCC 33909 / DSM 639 / JCM 8929 / NBRC 15157 / NCIMB 11770).